The following is a 460-amino-acid chain: GTPase Der (460 aa).

EngA-type G domains lie at 2–164 (QSII…HEEF) and 196–368 (IRVG…ENFT). GTP-binding positions include 8–15 (GKPNVGKS), 55–59 (DSGGL), 116–119 (NKVD), 202–209 (GRVNVGKS), 249–253 (DTAGI), and 313–316 (NKWD). Residues 369–453 (QKIQTSKLNT…PLVIASRKKG (85 aa)) form the KH-like domain.

Belongs to the TRAFAC class TrmE-Era-EngA-EngB-Septin-like GTPase superfamily. EngA (Der) GTPase family. In terms of assembly, associates with the 50S ribosomal subunit.

Functionally, GTPase that plays an essential role in the late steps of ribosome biogenesis. This Campylobacter jejuni subsp. jejuni serotype O:23/36 (strain 81-176) protein is GTPase Der.